The primary structure comprises 395 residues: L-rhamnonate dehydratase (395 aa).

Residues histidine 23 and arginine 49 each contribute to the substrate site. 3 residues coordinate Mg(2+): aspartate 215, glutamate 241, and glutamate 269. Histidine 319 serves as the catalytic Proton acceptor. A substrate-binding site is contributed by glutamate 339.

Belongs to the mandelate racemase/muconate lactonizing enzyme family. RhamD subfamily. As to quaternary structure, homooctamer; tetramer of dimers. Mg(2+) serves as cofactor.

It catalyses the reaction L-rhamnonate = 2-dehydro-3-deoxy-L-rhamnonate + H2O. Functionally, catalyzes the dehydration of L-rhamnonate to 2-keto-3-deoxy-L-rhamnonate (KDR). The chain is L-rhamnonate dehydratase from Delftia acidovorans (strain DSM 14801 / SPH-1).